The primary structure comprises 270 residues: Triosephosphate isomerase (270 aa).

27-29 (NWK) contributes to the substrate binding site. The active-site Electrophile is the H114. The Proton acceptor role is filled by E184. Substrate contacts are provided by residues G190, S230, and 251–252 (GG).

It belongs to the triosephosphate isomerase family. Homodimer.

It localises to the cytoplasm. The catalysed reaction is D-glyceraldehyde 3-phosphate = dihydroxyacetone phosphate. Its pathway is carbohydrate biosynthesis; gluconeogenesis. It participates in carbohydrate degradation; glycolysis; D-glyceraldehyde 3-phosphate from glycerone phosphate: step 1/1. Functionally, involved in the gluconeogenesis. Catalyzes stereospecifically the conversion of dihydroxyacetone phosphate (DHAP) to D-glyceraldehyde-3-phosphate (G3P). This chain is Triosephosphate isomerase, found in Chlamydia muridarum (strain MoPn / Nigg).